Here is a 189-residue protein sequence, read N- to C-terminus: Batroxicidin (189 aa).

A signal peptide spans Met-1 to Ala-22. A propeptide spanning residues His-23 to Val-155 is cleaved from the precursor. Intrachain disulfides connect Cys-79–Cys-90 and Cys-101–Cys-118. The segment covering Glu-125–Glu-148 has biased composition (acidic residues). A disordered region spans residues Glu-125–Pro-152.

It belongs to the cathelicidin family. As to expression, expressed by the venom gland.

It is found in the secreted. The protein resides in the target cell membrane. In terms of biological role, potent antimicrobial peptide against Gram-negative (MIC=0.25 ug/ml against E.coli ATCC 25922, MIC=1 ug/ml against P.aeruginosa) and Gram-positive bacteria (MIC=32 ug/ml against E.faecalis, MIC=32 ug/ml against S.aureus). Adopts an amphipathic alpha helical conformation, that may allow to partition into the target membrane. Low hemolytic activities have been observed on mammalian cells. In addition, when tested in vitro on the parasite Trypanosoma cruzi (responsible of the Chagas disease), is able to reduce the number of the three forms (epimastigote, trypomastigote and amastigote) by inducing cell death through necrosis. The polypeptide is Batroxicidin (Bothrops atrox (Barba amarilla)).